Here is a 465-residue protein sequence, read N- to C-terminus: Muscarinic acetylcholine receptor M2 (465 aa).

At 1 to 21 (MNNSTNSSNNVALTSPYKTFE) the chain is on the extracellular side. N-linked (GlcNAc...) asparagine glycans are attached at residues Asn2, Asn3, and Asn6. The chain crosses the membrane as a helical span at residues 22-44 (VVFIVLVAGSLSLVTIIGNILVM). Residues 45–58 (VSIKVNRHLQTVNN) lie on the Cytoplasmic side of the membrane. The chain crosses the membrane as a helical span at residues 59 to 79 (YFLFSLACADLIIGVFSMNLY). Residues 80–96 (TLYTVIGYWPLGPVVCD) lie on the Extracellular side of the membrane. Residues Cys95 and Cys175 are joined by a disulfide bond. Residues 97-118 (LWLALDYVVSNASVMNLLIISF) form a helical membrane-spanning segment. Positions 119–121 (DRY) match the Important for signaling motif. At 119 to 138 (DRYFCVTKPLTYPVKRTTKM) the chain is on the cytoplasmic side. Residues 139 to 161 (AGMMIAAAWVLSFILWAPAILFW) form a helical membrane-spanning segment. At 162 to 183 (QFIVGVRTVEDGECYIQFFSNA) the chain is on the extracellular side. A helical transmembrane segment spans residues 184–208 (AVTFGTAIAAFYLPVIIMTVLYWHI). Residues 209 to 386 (SRASKSRIKK…PPSREKKVTR (178 aa)) lie on the Cytoplasmic side of the membrane. The segment at 217–319 (KKDKKEPVAN…SVGHSKDENS (103 aa)) is disordered. Ser231 is modified (phosphoserine). Residues 253 to 269 (GLEHNKIQNGKTPRDAV) show a composition bias toward basic and acidic residues. 2 stretches are compositionally biased toward polar residues: residues 283 to 292 (NDSTSVSAVA) and 303 to 312 (DENTVSTSVG). A helical membrane pass occupies residues 387 to 409 (TILAILLAFIITWAPYNVMVLIN). Topologically, residues 410–417 (TFCAPCIP) are extracellular. A disulfide bridge connects residues Cys412 and Cys415. The helical transmembrane segment at 418 to 441 (NTVWTIGYWLCYINSTINPACYAL) threads the bilayer. An Important for signaling motif is present at residues 435 to 439 (NPACY). The Cytoplasmic portion of the chain corresponds to 442–465 (CNATFKKTFKHLLMCHYKNIGATR). 3 positions are modified to phosphothreonine: Thr445, Thr449, and Thr464.

This sequence belongs to the G-protein coupled receptor 1 family. Muscarinic acetylcholine receptor subfamily. CHRM2 sub-subfamily. Interacts with ARRB1 and ARRB2. Interacts with RACK1; the interaction regulates CHRM2 internalization. In terms of processing, phosphorylated in response to agonist treatment.

It localises to the cell membrane. It is found in the postsynaptic cell membrane. In terms of biological role, the muscarinic acetylcholine receptor mediates various cellular responses, including inhibition of adenylate cyclase, breakdown of phosphoinositides and modulation of potassium channels through the action of G proteins. Primary transducing effect is adenylate cyclase inhibition. Signaling promotes phospholipase C activity, leading to the release of inositol trisphosphate (IP3); this then triggers calcium ion release into the cytosol. This is Muscarinic acetylcholine receptor M2 (CHRM2) from Bos taurus (Bovine).